Consider the following 375-residue polypeptide: Arabinose metabolism transcriptional repressor (375 aa).

In terms of domain architecture, HTH gntR-type spans 1-70; sequence METKYNFVKQ…QGAGTFCADR (70 aa). A DNA-binding region (H-T-H motif) is located at residues 30–49; the sequence is ENELMKEYNVSRHTVRKAID.

It is found in the cytoplasm. In terms of biological role, transcriptional repressor of the arabinose utilization genes. This is Arabinose metabolism transcriptional repressor (araR) from Halalkalibacterium halodurans (strain ATCC BAA-125 / DSM 18197 / FERM 7344 / JCM 9153 / C-125) (Bacillus halodurans).